We begin with the raw amino-acid sequence, 726 residues long: Long-chain-fatty-acid--CoA ligase ACSBG1 (726 aa).

The disordered stretch occupies residues 1 to 39 (MPDSRAAPQESLLDASLGTTQENVGTSSLTDGQTLSKEP). A compositionally biased stretch (polar residues) spans 17–36 (LGTTQENVGTSSLTDGQTLS). S36 carries the phosphoserine modification. Y641 carries the phosphotyrosine modification. The disordered stretch occupies residues 707-726 (SKQGSSLPGFSLRWQTGASS).

It belongs to the ATP-dependent AMP-binding enzyme family. Bubblegum subfamily.

It is found in the cytoplasm. It localises to the cytoplasmic vesicle. The protein resides in the microsome. Its subcellular location is the endoplasmic reticulum. The protein localises to the cell membrane. It catalyses the reaction a long-chain fatty acid + ATP + CoA = a long-chain fatty acyl-CoA + AMP + diphosphate. The catalysed reaction is (E)-hexadec-2-enoate + ATP + CoA = (2E)-hexadecenoyl-CoA + AMP + diphosphate. The enzyme catalyses hexadecanoate + ATP + CoA = hexadecanoyl-CoA + AMP + diphosphate. Its function is as follows. Catalyzes the conversion of fatty acids such as long-chain and very long-chain fatty acids to their active form acyl-CoAs for both synthesis of cellular lipids, and degradation via beta-oxidation. Can activate diverse saturated, monosaturated and polyunsaturated fatty acids. The chain is Long-chain-fatty-acid--CoA ligase ACSBG1 from Bos taurus (Bovine).